We begin with the raw amino-acid sequence, 366 residues long: Chorismate synthase (366 aa).

The NADP(+) site is built by Arg-48 and Arg-54. FMN-binding positions include 125 to 127, 238 to 239, Gly-278, 293 to 297, and Arg-319; these read RSS, NA, and KPTSS.

Belongs to the chorismate synthase family. Homotetramer. FMNH2 serves as cofactor.

The catalysed reaction is 5-O-(1-carboxyvinyl)-3-phosphoshikimate = chorismate + phosphate. The protein operates within metabolic intermediate biosynthesis; chorismate biosynthesis; chorismate from D-erythrose 4-phosphate and phosphoenolpyruvate: step 7/7. Its function is as follows. Catalyzes the anti-1,4-elimination of the C-3 phosphate and the C-6 proR hydrogen from 5-enolpyruvylshikimate-3-phosphate (EPSP) to yield chorismate, which is the branch point compound that serves as the starting substrate for the three terminal pathways of aromatic amino acid biosynthesis. This reaction introduces a second double bond into the aromatic ring system. This Paraburkholderia phymatum (strain DSM 17167 / CIP 108236 / LMG 21445 / STM815) (Burkholderia phymatum) protein is Chorismate synthase.